We begin with the raw amino-acid sequence, 500 residues long: Nucleolar and spindle-associated protein 1 (500 aa).

Disordered regions lie at residues 48–204 (KNET…NFKK), 241–299 (TKKS…ASKS), 319–353 (VRFS…PESE), and 365–500 (ELLP…VPVK). The segment covering 82–92 (THRRGRGRKPI) has biased composition (basic residues). Over residues 113–127 (NMASSIDRTQQQNCT) the composition is skewed to polar residues. Over residues 264 to 274 (SRLSLLSPLPR) the composition is skewed to low complexity. Positions 276-298 (TGASPSRTPMSQRRSCRSSTASK) are enriched in polar residues. Residues 323–332 (EATKDNEHKR) show a composition bias toward basic and acidic residues. The span at 380–392 (ITLNTTTQPSPAT) shows a compositional bias: polar residues. The segment covering 442-451 (PWGESKENKP) has biased composition (basic and acidic residues). Polar residues predominate over residues 452 to 469 (DPNSNVSVLKNNYKQPHL).

The protein belongs to the NUSAP family. As to quaternary structure, interacts with DNA, microtubules, ipo7, kpna2 and kpnb1. Microtubule stabilization is inhibited by ipo7 and kpna2, while microtubule bundling is inhibited by kpnb1. Active GTP-bound ran causes dissociation of ipo7 and kpnb1.

The protein localises to the cytoplasm. It is found in the nucleus. The protein resides in the cytoskeleton. It localises to the spindle. Functionally, microtubule-associated protein with the capacity to bundle and stabilize microtubules. May associate with chromosomes and promote the organization of meiotic or mitotic spindle microtubules around them. The polypeptide is Nucleolar and spindle-associated protein 1 (nusap1) (Xenopus tropicalis (Western clawed frog)).